Here is a 311-residue protein sequence, read N- to C-terminus: Pyrimidine-specific ribonucleoside hydrolase RihA (311 aa).

The active site involves H240.

This sequence belongs to the IUNH family. RihA subfamily.

Hydrolyzes cytidine or uridine to ribose and cytosine or uracil, respectively. This is Pyrimidine-specific ribonucleoside hydrolase RihA from Klebsiella pneumoniae (strain 342).